A 309-amino-acid chain; its full sequence is Putative proline iminopeptidase (309 aa).

The AB hydrolase-1 domain maps to 33–291 (LYVHGGPGSG…LYVTNNAGHS (259 aa)). Ser105 acts as the Nucleophile in catalysis. Residue Asp262 is part of the active site. Catalysis depends on His290, which acts as the Proton donor.

It belongs to the peptidase S33 family.

The protein resides in the cytoplasm. It carries out the reaction Release of N-terminal proline from a peptide.. In terms of biological role, specifically catalyzes the removal of N-terminal proline residues from peptides. In Mycoplasma pneumoniae (strain ATCC 29342 / M129 / Subtype 1) (Mycoplasmoides pneumoniae), this protein is Putative proline iminopeptidase (pip).